The chain runs to 255 residues: Large ribosomal subunit protein uL4 (255 aa).

Belongs to the universal ribosomal protein uL4 family. In terms of assembly, part of the 50S ribosomal subunit.

In terms of biological role, one of the primary rRNA binding proteins, this protein initially binds near the 5'-end of the 23S rRNA. It is important during the early stages of 50S assembly. It makes multiple contacts with different domains of the 23S rRNA in the assembled 50S subunit and ribosome. Functionally, forms part of the polypeptide exit tunnel. The sequence is that of Large ribosomal subunit protein uL4 from Pyrococcus horikoshii (strain ATCC 700860 / DSM 12428 / JCM 9974 / NBRC 100139 / OT-3).